The primary structure comprises 449 residues: CCA-adding enzyme (449 aa).

2 residues coordinate ATP: Ser57 and Arg60. The CTP site is built by Ser57 and Arg60. Residues Asp69, Asp71, and Asp124 each coordinate Mg(2+). Residues His147, Lys167, and Tyr176 each contribute to the ATP site. Residues His147, Lys167, and Tyr176 each coordinate CTP.

It belongs to the tRNA nucleotidyltransferase/poly(A) polymerase family. Archaeal CCA-adding enzyme subfamily. In terms of assembly, homodimer. Mg(2+) is required as a cofactor.

It catalyses the reaction a tRNA precursor + 2 CTP + ATP = a tRNA with a 3' CCA end + 3 diphosphate. The catalysed reaction is a tRNA with a 3' CCA end + 2 CTP + ATP = a tRNA with a 3' CCACCA end + 3 diphosphate. In terms of biological role, catalyzes the addition and repair of the essential 3'-terminal CCA sequence in tRNAs without using a nucleic acid template. Adds these three nucleotides in the order of C, C, and A to the tRNA nucleotide-73, using CTP and ATP as substrates and producing inorganic pyrophosphate. tRNA 3'-terminal CCA addition is required both for tRNA processing and repair. Also involved in tRNA surveillance by mediating tandem CCA addition to generate a CCACCA at the 3' terminus of unstable tRNAs. While stable tRNAs receive only 3'-terminal CCA, unstable tRNAs are marked with CCACCA and rapidly degraded. The sequence is that of CCA-adding enzyme from Methanocaldococcus jannaschii (strain ATCC 43067 / DSM 2661 / JAL-1 / JCM 10045 / NBRC 100440) (Methanococcus jannaschii).